An 86-amino-acid polypeptide reads, in one-letter code: Small ribosomal subunit protein bS20 (86 aa).

This sequence belongs to the bacterial ribosomal protein bS20 family.

In terms of biological role, binds directly to 16S ribosomal RNA. In Buchnera aphidicola subsp. Cinara cedri (strain Cc), this protein is Small ribosomal subunit protein bS20.